A 407-amino-acid chain; its full sequence is Phosphopentomutase (407 aa).

Mn(2+) is bound by residues D10, D306, H311, D347, H348, and H359.

This sequence belongs to the phosphopentomutase family. It depends on Mn(2+) as a cofactor.

It is found in the cytoplasm. The enzyme catalyses 2-deoxy-alpha-D-ribose 1-phosphate = 2-deoxy-D-ribose 5-phosphate. It carries out the reaction alpha-D-ribose 1-phosphate = D-ribose 5-phosphate. It participates in carbohydrate degradation; 2-deoxy-D-ribose 1-phosphate degradation; D-glyceraldehyde 3-phosphate and acetaldehyde from 2-deoxy-alpha-D-ribose 1-phosphate: step 1/2. Isomerase that catalyzes the conversion of deoxy-ribose 1-phosphate (dRib-1-P) and ribose 1-phosphate (Rib-1-P) to deoxy-ribose 5-phosphate (dRib-5-P) and ribose 5-phosphate (Rib-5-P), respectively. In Escherichia coli O127:H6 (strain E2348/69 / EPEC), this protein is Phosphopentomutase.